A 663-amino-acid polypeptide reads, in one-letter code: Polyunsaturated fatty acid lipoxygenase ALOX12 (663 aa).

In terms of domain architecture, PLAT spans 2-114 (GRYRVRVVTG…ILSLPEGTAR (113 aa)). Residues 115-663 (LAGDNALDVF…PSRIENSITI (549 aa)) enclose the Lipoxygenase domain. Ser246 bears the Phosphoserine mark. Fe cation is bound by residues His360, His365, His540, Asn544, and Ile663.

This sequence belongs to the lipoxygenase family. The cofactor is Fe cation. In terms of tissue distribution, found primarily in platelets and in microsomal and cytosolic fractions of the epidermis (at protein level).

Its subcellular location is the cytoplasm. The protein resides in the cytosol. The protein localises to the membrane. It carries out the reaction (5Z,8Z,11Z,14Z)-eicosatetraenoate + O2 = (12S)-hydroperoxy-(5Z,8Z,10E,14Z)-eicosatetraenoate. It catalyses the reaction (9Z,12Z)-octadecadienoate + O2 = (13S)-hydroperoxy-(9Z,11E)-octadecadienoate. The enzyme catalyses 2 leukotriene A4 + O2 + 2 H2O = 2 lipoxin A4. The catalysed reaction is 2 leukotriene A4 + O2 + 2 H2O = 2 lipoxin B4. It carries out the reaction (5Z,8Z,11Z)-eicosatrienoate + O2 = (12S)-hydroperoxy-(5Z,8Z,10E)-eicosatrienoate. It catalyses the reaction (8Z,11Z,14Z)-eicosatrienoate + O2 = (12S)-hydroperoxy-(8Z,10E,14Z)-eicosatrienoate. The enzyme catalyses (4Z,7Z,10Z,13Z,16Z,19Z)-docosahexaenoate + O2 = (14S)-hydroperoxy-(4Z,7Z,10Z,12E,16Z,19Z)-docosahexaenoate. The catalysed reaction is (7S)-hydroperoxy-(4Z,8E,10Z,13Z,16Z,19Z)-docosahexaenoate + O2 = (7S,14S)-dihydroperoxy-(4Z,8E,10Z,12E,16Z,19Z)-docosahexaenoate. It carries out the reaction (7S)-hydroperoxy-(4Z,8E,10Z,13Z,16Z,19Z)-docosahexaenoate + O2 = (7S,17S)-dihydroperoxy-(4Z,8E,10Z,13Z,15E,19Z)-docosahexaenoate. It catalyses the reaction (14R,15S)-epoxy-(5Z,8Z,11Z)-eicosatrienoate + O2 = (12S)-hydroperoxy-(14R,15S)-epoxy-(5Z,8Z,10E)-eicosatrienoate. The enzyme catalyses (14S,15R)-epoxy-(5Z,8Z,11Z)-eicosatrienoate + O2 = (12S)-hydroperoxy-(14S,15R)-epoxy-(5Z,8Z,10E)-eicosatrienoate. The catalysed reaction is (5Z,8Z,11Z,14Z)-eicosatetraenoate + O2 = (15S)-hydroperoxy-(5Z,8Z,11Z,13E)-eicosatetraenoate. It carries out the reaction (14S)-hydroperoxy-(4Z,7Z,10Z,12E,16Z,19Z)-docosahexaenoate = (13S,14S)-epoxy-(4Z,7Z,9E,11E,16Z,19Z)-docosahexaenoate + H2O. It catalyses the reaction N-(5Z,8Z,11Z,14Z)-eicosatetraenoyl-L-alanine + O2 = N-(15S)-hydroperoxy-(5Z,8Z,11Z,13E)-eicosatetraenoyl-alanine. The enzyme catalyses N-(5Z,8Z,11Z,14Z)-eicosatetraenoyl-L-alanine + O2 = N-(12S)-hydroperoxy-(5Z,8Z,10E,14Z)-eicosatetraenoyl-alanine. The catalysed reaction is N-(5Z,8Z,11Z,14Z)-eicosatetraenoyl-gamma-aminobutanoate + O2 = N-(15S)-hydroperoxy-(5Z,8Z,11Z,13E)-eicosatetraenoyl-gamma-aminobutanoate. It carries out the reaction N-(5Z,8Z,11Z,14Z)-eicosatetraenoyl-gamma-aminobutanoate + O2 = N-(12S)-hydroperoxy-(5Z,8Z,10E,14Z)-eicosatetraenoyl-gamma-aminobutanoate. It catalyses the reaction N-(5Z,8Z,11Z,14Z)-eicosatetraenoyl-glycine + O2 = N-(15S)-hydroperoxy-(5Z,8Z,11Z,13E)-eicosatetraenoyl-glycine. The enzyme catalyses N-(5Z,8Z,11Z,14Z)-eicosatetraenoyl-glycine + O2 = N-(12S)-hydroperoxy-(5Z,8Z,10E,14Z)-eicosatetraenoyl-glycine. The catalysed reaction is N-(5Z,8Z,11Z,14Z)-eicosatetraenoyl-taurine + O2 = N-(12S)-hydroperoxy-(5Z,8Z,10E,14Z)-eicosatetraenoyl-taurine. It carries out the reaction N-(5Z,8Z,11Z,14Z)-eicosatetraenoyl-taurine + O2 = N-(15S)-hydroperoxy-(5Z,8Z,11Z,13E)-eicosatetraenoyl-taurine. It catalyses the reaction (5Z,8Z,11Z,14Z,17Z)-eicosapentaenoate + O2 = (12S)-hydroperoxy-(5Z,8Z,10E,14Z,17Z)-eicosapentaenoate. The protein operates within lipid metabolism; hydroperoxy eicosatetraenoic acid biosynthesis. With respect to regulation, activated by EGF. Arachidonic acid conversion is inhibited by (13S,14S)-epoxy-(4Z,7Z,9E,11E,16Z,19Z)-docosahexaenoate (13S,14S-epoxy-DHA). Arachidonate 12-lipoxygenase activity is decreased when PH decreases from 7.4 to 6. Catalyzes the regio and stereo-specific incorporation of molecular oxygen into free and esterified polyunsaturated fatty acids generating lipid hydroperoxides that can be further reduced to the corresponding hydroxy species. Mainly converts arachidonate ((5Z,8Z,11Z,14Z)-eicosatetraenoate) to the specific bioactive lipid (12S)-hydroperoxyeicosatetraenoate/(12S)-HPETE. Through the production of bioactive lipids like (12S)-HPETE it regulates different biological processes including platelet activation. It can also catalyze the epoxidation of double bonds of polyunsaturated fatty acids such as (14S)-hydroperoxy-docosahexaenoate/(14S)-HPDHA resulting in the formation of (13S,14S)-epoxy-DHA. Furthermore, it may participate in the sequential oxidations of DHA ((4Z,7Z,10Z,13Z,16Z,19Z)-docosahexaenoate) to generate specialized pro-resolving mediators (SPMs) like resolvin D5 ((7S,17S)-diHPDHA) and (7S,14S)-diHPDHA, that actively down-regulate the immune response and have anti-aggregation properties with platelets. An additional function involves a multistep process by which it transforms leukotriene A4/LTA4 into the bioactive lipids lipoxin A4/LXA4 and lipoxin B4/LXB4, both are vasoactive and LXA4 may regulate neutrophil function via occupancy of specific recognition sites. Can also peroxidize linoleate ((9Z,12Z)-octadecadienoate) to (13S)-hydroperoxyoctadecadienoate/ (13S-HPODE). Due to its role in regulating both the expression of the vascular endothelial growth factor (VEGF, an angiogenic factor involved in the survival and metastasis of solid tumors) and the expression of integrin beta-1 (known to affect tumor cell migration and proliferation), it can be regarded as protumorigenic. Important for cell survival, as it may play a role not only in proliferation but also in the prevention of apoptosis in vascular smooth muscle cells. This Mus musculus (Mouse) protein is Polyunsaturated fatty acid lipoxygenase ALOX12 (Alox12).